The primary structure comprises 381 residues: Creatine kinase M-type (381 aa).

Positions 11-98 (KLNYKPEEEY…FDPIISDRHG (88 aa)) constitute a Phosphagen kinase N-terminal domain. The Phosphagen kinase C-terminal domain maps to 125 to 367 (YVLSSRVRTG…KLMVEMEKKL (243 aa)). ATP is bound at residue 128–132 (SSRVR). Ser164 carries the post-translational modification Phosphoserine. At Thr166 the chain carries Phosphothreonine. Position 178 is a phosphoserine (Ser178). A Phosphothreonine modification is found at Thr180. His191 serves as a coordination point for ATP. Position 199 is a phosphoserine (Ser199). ATP-binding residues include Arg236 and Arg292. Phosphothreonine is present on residues Thr313 and Thr322. ATP contacts are provided by residues 320-325 (RGTGGV) and Asp335. At Ser372 the chain carries Phosphoserine.

It belongs to the ATP:guanido phosphotransferase family. In terms of assembly, dimer of identical or non-identical chains, which can be either B (brain type) or M (muscle type). With MM being the major form in skeletal muscle and myocardium, MB existing in myocardium, and BB existing in many tissues, especially brain.

It is found in the cytoplasm. It carries out the reaction creatine + ATP = N-phosphocreatine + ADP + H(+). In terms of biological role, reversibly catalyzes the transfer of phosphate between ATP and various phosphogens (e.g. creatine phosphate). Creatine kinase isoenzymes play a central role in energy transduction in tissues with large, fluctuating energy demands, such as skeletal muscle, heart, brain and spermatozoa. The sequence is that of Creatine kinase M-type (CKM) from Homo sapiens (Human).